The following is a 276-amino-acid chain: Eukaryotic translation initiation factor 3 subunit G-2 (276 aa).

An RRM domain is found at 196–274 (SAVRISNLSE…LILCVEWSKP (79 aa)).

This sequence belongs to the eIF-3 subunit G family. Component of the eukaryotic translation initiation factor 3 (eIF-3) complex. The eIF-3 complex interacts with pix.

It localises to the cytoplasm. Its function is as follows. RNA-binding component of the eukaryotic translation initiation factor 3 (eIF-3) complex, which is involved in protein synthesis of a specialized repertoire of mRNAs and, together with other initiation factors, stimulates binding of mRNA and methionyl-tRNAi to the 40S ribosome. The eIF-3 complex specifically targets and initiates translation of a subset of mRNAs involved in cell proliferation. This subunit can bind 18S rRNA. This is Eukaryotic translation initiation factor 3 subunit G-2 from Drosophila persimilis (Fruit fly).